The following is a 315-amino-acid chain: Mitochondrial outer membrane import complex protein METAXIN (315 aa).

Methionine 1 bears the N-acetylmethionine mark. Residues 157-181 (ENAEQREKQIYKRASEAYEALSTRL) adopt a coiled-coil conformation. The helical transmembrane segment at 195 to 215 (LDAFLLSHILFIIQALPVTSV) threads the bilayer. Positions 240 to 277 (ASSSSPSPPLHSFPSSFPRKSSKPKSKPKVEKTEEEKK) are disordered. The span at 267-277 (PKVEKTEEEKK) shows a compositional bias: basic and acidic residues. The helical transmembrane segment at 284-304 (FFLAAQFLAVVIYVSVMGGGS) threads the bilayer.

It belongs to the metaxin family. In terms of assembly, part of a high molecular weight complex that is distinct from the TOM complex. Interacts with a variety of mitochondrial precursor proteins. As to expression, expressed in roots, young cotyledons, flowers and leaves.

The protein resides in the mitochondrion inner membrane. It is found in the mitochondrion outer membrane. Its function is as follows. Involved in transport of proteins into the mitochondrion. The chain is Mitochondrial outer membrane import complex protein METAXIN (MTX1) from Arabidopsis thaliana (Mouse-ear cress).